A 58-amino-acid polypeptide reads, in one-letter code: Metallothionein-1 (58 aa).

The interval Pro-1–Ser-28 is beta. A divalent metal cation contacts are provided by Cys-4, Cys-5, Cys-9, Cys-11, Cys-16, Cys-20, Cys-22, Cys-25, Cys-27, Cys-30, Cys-33, Cys-37, Cys-39, Cys-45, Cys-49, Cys-53, Cys-55, and Cys-56. An alpha region spans residues Pro-29 to Thr-58.

The protein belongs to the metallothionein superfamily. Type 3 family.

Functionally, metallothioneins have a high content of cysteine residues that bind various heavy metals. Class I MTS in marine crustacea are involved in the sequestration of elevated levels of heavy-metal ions. In Scylla serrata (Mud crab), this protein is Metallothionein-1.